An 834-amino-acid chain; its full sequence is RNA-binding protein 12B-B (834 aa).

The 76-residue stretch at 154–229 (PYLFLRGLPY…RFIEVMQGSE (76 aa)) folds into the RRM 1 domain. Positions 237 to 277 (GTATEGGDTPRMRSEEHSPSRRINGRHFRKRSHSKSPRARS) are disordered. Over residues 244–255 (DTPRMRSEEHSP) the composition is skewed to basic and acidic residues. A compositionally biased stretch (basic residues) spans 259–277 (INGRHFRKRSHSKSPRARS). RRM domains are found at residues 283–359 (FYVH…PVSR) and 401–478 (LCIY…LISE). 2 disordered regions span residues 546-572 (GYFRQSDRCSPEDFRHSPEDYRHPWEE) and 621-643 (HFRRSYQEHIRRPPQEHFRRSRE). Over residues 550–572 (QSDRCSPEDFRHSPEDYRHPWEE) the composition is skewed to basic and acidic residues. Ser-701 carries the post-translational modification Phosphoserine. The region spanning 758 to 834 (IRVMISNLPF…GPRKVKLSLL (77 aa)) is the RRM 4 domain.

The chain is RNA-binding protein 12B-B (Rbm12b2) from Mus musculus (Mouse).